Reading from the N-terminus, the 489-residue chain is Zinc finger protein 772 (489 aa).

Positions 27–98 constitute a KRAB domain; the sequence is VNFEDVFVYF…DWVDMTLAVA (72 aa). 10 C2H2-type zinc fingers span residues 144-166, 172-194, 266-288, 294-316, 322-344, 350-372, 378-400, 406-428, 434-456, and 462-484; these read YPCGTCGLVLKDILHLAEHQETH, YMCVLCGKQFCFSANLHQHQKQH, YKCSECGKTFSRKDSLVQHQRVH, YECGECGKTFSRKPILAQHQRIH, YECGICGKVFNHSSNLIVHQRVH, YKCSECGKAYSHKSTLVQHESIH, YECSECGKYFGHKYRLIKHWSVH, YECIACGKFFSQSSDLIAHQRVH, YVCSECGKAFSHKHVLVQHHRIH, and YKCSECGKAFRQRASLIRHWKIH.

It belongs to the krueppel C2H2-type zinc-finger protein family.

The protein resides in the nucleus. May be involved in transcriptional regulation. The sequence is that of Zinc finger protein 772 (ZNF772) from Homo sapiens (Human).